The chain runs to 694 residues: Beta-galactosidase (694 aa).

Residues 1-31 (MGKRFPSGWFSPRVHPPRRQRSPMTNQATPG) form a disordered region. Polar residues predominate over residues 22–31 (SPMTNQATPG). Substrate-binding residues include arginine 144 and asparagine 182. Residue glutamate 183 is the Proton donor of the active site. Glutamate 341 acts as the Nucleophile in catalysis. Substrate is bound by residues tryptophan 349 and 389–392 (EKFH).

It belongs to the glycosyl hydrolase 42 family. In terms of assembly, homotrimer.

It catalyses the reaction Hydrolysis of terminal non-reducing beta-D-galactose residues in beta-D-galactosides.. Strongly inhibited by glucose. No activity is lost during treatment with 100 mM EDTA after 2 hours. Activity not considerably affected by metal ions (5 mM), including Na(+), K(+), Mg(2+), Co(2+) and Ca(2+). Completely inhibited by Cu(2+) and Zn(2+) (5 mM) and is strongly inhibited by Mn(2+) (11%), Fe(2+) (25%) and Ni(2+) (38%) in comparison with the activity in the absence of cations (100%). Activity not affected by dithiothreitol, beta-mercaptoethanol and L-cysteine whereas reduced glutathione almost completely inactivates it. With ONPG as substrate, the addition of ethanol up to 20% still slightly stimulates activity. The activity increases up to 120% in the presence of 8% v/v ethanol at pH 5.5. In terms of biological role, hydrolyzes p-nitrophenyl-beta-D-galactopyranoside (PNPG), o-nitrophenyl-beta-D-galactopyranoside (ONPG) and chromogen 5-bromo-4-chloro-3-indolyl-beta-D-galactopyranoside (X-gal), with highest activity against PNPG. Also acts on p-nitrophenyl-beta-D-glucopyranoside (PNPGlu) and o-nitrophenyl-beta-D-glucopyranoside (ONPGlu), but with significantly lower activity. This is Beta-galactosidase from Arthrobacter sp.